A 29-amino-acid polypeptide reads, in one-letter code: Glucagon (29 aa).

This sequence belongs to the glucagon family.

Its subcellular location is the secreted. Glucagon plays a key role in glucose metabolism and homeostasis. Regulates blood glucose by increasing gluconeogenesis and decreasing glycolysis. The sequence is that of Glucagon (GCG) from Meleagris gallopavo (Wild turkey).